The following is a 163-amino-acid chain: ATP synthase subunit b (163 aa).

Residues 1–21 form a helical membrane-spanning segment; sequence MISFNLTSIVNLVGFLAFMFL.

Belongs to the ATPase B chain family. F-type ATPases have 2 components, F(1) - the catalytic core - and F(0) - the membrane proton channel. F(1) has five subunits: alpha(3), beta(3), gamma(1), delta(1), epsilon(1). F(0) has three main subunits: a(1), b(2) and c(10-14). The alpha and beta chains form an alternating ring which encloses part of the gamma chain. F(1) is attached to F(0) by a central stalk formed by the gamma and epsilon chains, while a peripheral stalk is formed by the delta and b chains.

Its subcellular location is the cell inner membrane. Functionally, f(1)F(0) ATP synthase produces ATP from ADP in the presence of a proton or sodium gradient. F-type ATPases consist of two structural domains, F(1) containing the extramembraneous catalytic core and F(0) containing the membrane proton channel, linked together by a central stalk and a peripheral stalk. During catalysis, ATP synthesis in the catalytic domain of F(1) is coupled via a rotary mechanism of the central stalk subunits to proton translocation. In terms of biological role, component of the F(0) channel, it forms part of the peripheral stalk, linking F(1) to F(0). In Petrotoga mobilis (strain DSM 10674 / SJ95), this protein is ATP synthase subunit b.